A 70-amino-acid chain; its full sequence is uncharacterized protein (70 aa).

Residues 15–37 (IFAFLLFRLCKFCCVFCCALCNV) traverse the membrane as a helical segment.

It localises to the membrane. This is an uncharacterized protein from Dictyostelium discoideum (Social amoeba).